Reading from the N-terminus, the 164-residue chain is ATP synthase subunit b 1 (164 aa).

A helical transmembrane segment spans residues 8 to 28 (AETWVAVGFAILMVVFVYFGV).

The protein belongs to the ATPase B chain family. In terms of assembly, F-type ATPases have 2 components, F(1) - the catalytic core - and F(0) - the membrane proton channel. F(1) has five subunits: alpha(3), beta(3), gamma(1), delta(1), epsilon(1). F(0) has three main subunits: a(1), b(2) and c(10-14). The alpha and beta chains form an alternating ring which encloses part of the gamma chain. F(1) is attached to F(0) by a central stalk formed by the gamma and epsilon chains, while a peripheral stalk is formed by the delta and b chains.

It is found in the cell inner membrane. F(1)F(0) ATP synthase produces ATP from ADP in the presence of a proton or sodium gradient. F-type ATPases consist of two structural domains, F(1) containing the extramembraneous catalytic core and F(0) containing the membrane proton channel, linked together by a central stalk and a peripheral stalk. During catalysis, ATP synthesis in the catalytic domain of F(1) is coupled via a rotary mechanism of the central stalk subunits to proton translocation. Functionally, component of the F(0) channel, it forms part of the peripheral stalk, linking F(1) to F(0). The chain is ATP synthase subunit b 1 from Rhodopseudomonas palustris (strain BisA53).